We begin with the raw amino-acid sequence, 196 residues long: Imidazole glycerol phosphate synthase subunit HisH (196 aa).

The Glutamine amidotransferase type-1 domain maps to 2-196 (NIVIIDTNCS…QQLVKNFLEI (195 aa)). Cysteine 77 serves as the catalytic Nucleophile. Active-site residues include histidine 178 and glutamate 180.

In terms of assembly, heterodimer of HisH and HisF.

Its subcellular location is the cytoplasm. The enzyme catalyses 5-[(5-phospho-1-deoxy-D-ribulos-1-ylimino)methylamino]-1-(5-phospho-beta-D-ribosyl)imidazole-4-carboxamide + L-glutamine = D-erythro-1-(imidazol-4-yl)glycerol 3-phosphate + 5-amino-1-(5-phospho-beta-D-ribosyl)imidazole-4-carboxamide + L-glutamate + H(+). It carries out the reaction L-glutamine + H2O = L-glutamate + NH4(+). It functions in the pathway amino-acid biosynthesis; L-histidine biosynthesis; L-histidine from 5-phospho-alpha-D-ribose 1-diphosphate: step 5/9. In terms of biological role, IGPS catalyzes the conversion of PRFAR and glutamine to IGP, AICAR and glutamate. The HisH subunit catalyzes the hydrolysis of glutamine to glutamate and ammonia as part of the synthesis of IGP and AICAR. The resulting ammonia molecule is channeled to the active site of HisF. The polypeptide is Imidazole glycerol phosphate synthase subunit HisH (Blochmanniella pennsylvanica (strain BPEN)).